Reading from the N-terminus, the 379-residue chain is UDP-4-amino-4-deoxy-L-arabinose--oxoglutarate aminotransferase (379 aa).

An N6-(pyridoxal phosphate)lysine modification is found at lysine 182.

This sequence belongs to the DegT/DnrJ/EryC1 family. ArnB subfamily. Homodimer. It depends on pyridoxal 5'-phosphate as a cofactor.

The enzyme catalyses UDP-4-amino-4-deoxy-beta-L-arabinose + 2-oxoglutarate = UDP-beta-L-threo-pentopyranos-4-ulose + L-glutamate. It functions in the pathway nucleotide-sugar biosynthesis; UDP-4-deoxy-4-formamido-beta-L-arabinose biosynthesis; UDP-4-deoxy-4-formamido-beta-L-arabinose from UDP-alpha-D-glucuronate: step 2/3. The protein operates within bacterial outer membrane biogenesis; lipopolysaccharide biosynthesis. Catalyzes the conversion of UDP-4-keto-arabinose (UDP-Ara4O) to UDP-4-amino-4-deoxy-L-arabinose (UDP-L-Ara4N). The modified arabinose is attached to lipid A and is required for resistance to polymyxin and cationic antimicrobial peptides. The chain is UDP-4-amino-4-deoxy-L-arabinose--oxoglutarate aminotransferase from Klebsiella pneumoniae (strain 342).